A 357-amino-acid chain; its full sequence is Pre-mRNA-splicing factor RBM22 homolog (357 aa).

A C3H1-type zinc finger spans residues 153–180 (RNMARVCSFWRKNSCNRGDECPYLHKEI). Residues 222 to 295 (NKICIQGISE…CNLTVHLQDN (74 aa)) form the RRM domain.

This sequence belongs to the SLT11 family. Probable component of the spliceosome C complex.

The protein resides in the nucleus. Functionally, involved in pre-mRNA splicing. Binds RNA. The chain is Pre-mRNA-splicing factor RBM22 homolog from Plasmodium falciparum (isolate 3D7).